The sequence spans 153 residues: Aspartate carbamoyltransferase regulatory chain (153 aa).

Residues Cys109, Cys114, Cys138, and Cys141 each contribute to the Zn(2+) site.

Belongs to the PyrI family. Contains catalytic and regulatory chains. Zn(2+) serves as cofactor.

Its function is as follows. Involved in allosteric regulation of aspartate carbamoyltransferase. This is Aspartate carbamoyltransferase regulatory chain from Salmonella newport (strain SL254).